Consider the following 249-residue polypeptide: Proteasome activator complex subunit 1 (249 aa).

Residues 60–102 (PLDIPVPDPVKEKEKEERKKQQEKEEKDEKKKGDEDDKGPPCG) form a disordered region. A compositionally biased stretch (basic and acidic residues) spans 68–98 (PVKEKEKEERKKQQEKEEKDEKKKGDEDDKG).

The protein belongs to the PA28 family. As to quaternary structure, heterodimer of PSME1 and PSME2, which forms a hexameric ring. PSME1 can form homoheptamers.

Its function is as follows. Implicated in immunoproteasome assembly and required for efficient antigen processing. The PA28 activator complex enhances the generation of class I binding peptides by altering the cleavage pattern of the proteasome. The protein is Proteasome activator complex subunit 1 (Psme1) of Rattus norvegicus (Rat).